Here is a 155-residue protein sequence, read N- to C-terminus: FHA domain-containing protein FhaB (155 aa).

The chain crosses the membrane as a helical span at residues 6–28 (LQLTRVGFLLLLWLFIWSVLRIL). Residue Thr-36 is modified to Phosphothreonine. Positions 83–132 (VLIGRADDSTLVLTDDYASTRHARLSPRGSEWYVEDLGSTNGTYLDRAKV) constitute an FHA domain.

Post-translationally, phosphorylated by PknB. Dephosphorylated by PstP.

Its subcellular location is the cell membrane. The protein is FHA domain-containing protein FhaB (fhaB) of Mycolicibacterium smegmatis (strain ATCC 700084 / mc(2)155) (Mycobacterium smegmatis).